The primary structure comprises 261 residues: 5'-nucleotidase SurE (261 aa).

Residues D8, D9, S39, and N91 each coordinate a divalent metal cation.

It belongs to the SurE nucleotidase family. Requires a divalent metal cation as cofactor.

The protein resides in the cytoplasm. It carries out the reaction a ribonucleoside 5'-phosphate + H2O = a ribonucleoside + phosphate. In terms of biological role, nucleotidase that shows phosphatase activity on nucleoside 5'-monophosphates. The polypeptide is 5'-nucleotidase SurE (Polaromonas naphthalenivorans (strain CJ2)).